The sequence spans 335 residues: Galactosylgalactosylxylosylprotein 3-beta-glucuronosyltransferase 3 (335 aa).

The Cytoplasmic segment spans residues 1 to 7; it reads MKLKLKN. A helical; Signal-anchor for type II membrane protein transmembrane segment spans residues 8–28; the sequence is VFLAYFLVSIAGLLYALVQLG. Residues 29–335 lie on the Lumenal side of the membrane; sequence QPCDCLPPLR…GQGSDPAIEV (307 aa). UDP-alpha-D-glucuronate contacts are provided by residues 82 to 84, Asp-113, Arg-156, Arg-161, and 194 to 196; these read PTY and DDD. Asp-196 contributes to the Mn(2+) binding site. An interaction with galactose moiety of substrate glycoprotein region spans residues 243-252; it reads WEPNRPFPLD. Residue Glu-281 is the Proton donor/acceptor of the active site. An N-linked (GlcNAc...) asparagine glycan is attached at Asn-300. 308 to 310 lines the UDP-alpha-D-glucuronate pocket; it reads HTR. Over residues 312-322 the composition is skewed to basic and acidic residues; it reads EKPKMKQEEQL. The tract at residues 312 to 335 is disordered; sequence EKPKMKQEEQLQRQGQGSDPAIEV.

It belongs to the glycosyltransferase 43 family. Homodimer; disulfide-linked. Interacts with PXYLP1; the interaction increases the 2-phosphoxylose phosphatase activity of PXYLP1 during completion of linkage region formation in a B3GAT3-mediated manner. Mn(2+) is required as a cofactor. In terms of processing, N-glycosylated. Expressed in heart, aorta, bone, and also in osteoblasts.

The protein localises to the golgi apparatus membrane. It localises to the golgi apparatus. The protein resides in the cis-Golgi network. The enzyme catalyses 3-O-(beta-D-galactosyl-(1-&gt;3)-beta-D-galactosyl-(1-&gt;4)-beta-D-xylosyl)-L-seryl-[protein] + UDP-alpha-D-glucuronate = 3-O-(beta-D-GlcA-(1-&gt;3)-beta-D-Gal-(1-&gt;3)-beta-D-Gal-(1-&gt;4)-beta-D-Xyl)-L-seryl-[protein] + UDP + H(+). Its pathway is protein modification; protein glycosylation. Functionally, glycosaminoglycans biosynthesis. Involved in forming the linkage tetrasaccharide present in heparan sulfate and chondroitin sulfate. Transfers a glucuronic acid moiety from the uridine diphosphate-glucuronic acid (UDP-GlcUA) to the common linkage region trisaccharide Gal-beta-1,3-Gal-beta-1,4-Xyl covalently bound to a Ser residue at the glycosaminylglycan attachment site of proteoglycans. Can also play a role in the biosynthesis of l2/HNK-1 carbohydrate epitope on glycoproteins. Stimulates 2-phosphoxylose phosphatase activity of PXYLP1 in presence of uridine diphosphate-glucuronic acid (UDP-GlcUA) during completion of linkage region formation. This is Galactosylgalactosylxylosylprotein 3-beta-glucuronosyltransferase 3 (B3gat3) from Mus musculus (Mouse).